The primary structure comprises 378 residues: MLRRKRAFTDESLMLMERGLPRLVTTSTTPTPTTEPTTEPTTTKDETSQTSATDASTATTSTAATSTAATSSTSTDITATSLTITSSSLSTDVANIVPPSAENNPYIFRTSALSGTVFIAVGSIAGAILMLIFLWWSITKYLNYKRTKKDYLESMATQYPYGSRGGHAHHSSIFSTASSDVYSYGGDDEKLSLGHSRSQSVDKKTHEKVKKSKIGLFGGSTNDIFKTPTRNDSWESLSDAITNYGDGSVHRFNPIQDDIQYNNRRSLFISPTVEVMNLPRQEVPDIFATPKKQQTSIYNDYDTPLIPDLSKPEDVALSPQRSHRKTPSNDKYHRRNRSSANLSPSRSPTRTPIRTRNMARDHRKTPSMYLEDLLDDNY.

Positions 18-70 (RGLPRLVTTSTTPTPTTEPTTEPTTTKDETSQTSATDASTATTSTAATSTAAT) are disordered. Composition is skewed to low complexity over residues 25 to 41 (TTST…TEPT) and 48 to 70 (SQTS…TAAT). The chain crosses the membrane as a helical span at residues 118–138 (FIAVGSIAGAILMLIFLWWSI). The segment at 299-368 (NDYDTPLIPD…ARDHRKTPSM (70 aa)) is disordered. The segment covering 321–337 (RSHRKTPSNDKYHRRNR) has biased composition (basic residues). Positions 343 to 356 (SPSRSPTRTPIRTR) are enriched in low complexity.

Belongs to the PRM5 family.

It localises to the vacuole membrane. The protein is Vacuolar membrane protein CAGL0J10076g of Candida glabrata (strain ATCC 2001 / BCRC 20586 / JCM 3761 / NBRC 0622 / NRRL Y-65 / CBS 138) (Yeast).